The sequence spans 469 residues: A-type ATP synthase subunit B (469 aa).

It belongs to the ATPase alpha/beta chains family. As to quaternary structure, has multiple subunits with at least A(3), B(3), C, D, E, F, H, I and proteolipid K(x).

It is found in the cell membrane. Component of the A-type ATP synthase that produces ATP from ADP in the presence of a proton gradient across the membrane. The B chain is a regulatory subunit. The sequence is that of A-type ATP synthase subunit B from Staphylothermus marinus (strain ATCC 43588 / DSM 3639 / JCM 9404 / F1).